The following is a 408-amino-acid chain: Peptidase T (408 aa).

Zn(2+) is bound at residue His78. Asp80 is an active-site residue. Residue Asp141 coordinates Zn(2+). Glu175 acts as the Proton acceptor in catalysis. The Zn(2+) site is built by Glu176, Asp198, and His380.

This sequence belongs to the peptidase M20B family. Requires Zn(2+) as cofactor.

The protein localises to the cytoplasm. The catalysed reaction is Release of the N-terminal residue from a tripeptide.. Its function is as follows. Cleaves the N-terminal amino acid of tripeptides. The chain is Peptidase T from Clostridium botulinum (strain Langeland / NCTC 10281 / Type F).